The sequence spans 219 residues: Probable GTP-binding protein EngB (219 aa).

The EngB-type G domain occupies 31-205 (VGVEIAFAGR…LSILNEWCHP (175 aa)). GTP is bound by residues 39–46 (GRSNAGKS), 66–70 (GRTQL), 84–87 (DLPG), 151–154 (TKSD), and 184–186 (FSA). Residues Ser-46 and Thr-68 each coordinate Mg(2+).

It belongs to the TRAFAC class TrmE-Era-EngA-EngB-Septin-like GTPase superfamily. EngB GTPase family. Requires Mg(2+) as cofactor.

Necessary for normal cell division and for the maintenance of normal septation. The protein is Probable GTP-binding protein EngB of Shewanella sp. (strain MR-7).